The sequence spans 258 residues: uncharacterized protein (258 aa).

3 Solcar repeats span residues 9–78 (KPIL…AKAR), 81–160 (PGVR…FKKK), and 165–246 (DHVF…VKSH). 6 helical membrane-spanning segments follow: residues 11-31 (ILVGGLSGLVAETLVFPLSTI), 53-73 (GLSSVLVSTLPSASSFFFVYE), 87-107 (LVSASVAEVVSCGILAPAEVV), 139-159 (MCGRNVPATAFQFVLYEQFKK), 171-191 (PKGAALSGAITAAVLTPLDVI), and 218-239 (FEKGLGLRVFASSLGLSIYLGT).

This sequence belongs to the mitochondrial carrier (TC 2.A.29) family.

It is found in the mitochondrion inner membrane. This is an uncharacterized protein from Schizosaccharomyces pombe (strain 972 / ATCC 24843) (Fission yeast).